A 377-amino-acid chain; its full sequence is Multiple sugar-binding transport ATP-binding protein MsmK (377 aa).

Residues 4–246 form the ABC transporter domain; that stretch reads LNLNHIYKKY…PANKFVAGFI (243 aa). 38–45 is a binding site for ATP; the sequence is GPSGCGKS.

Belongs to the ABC transporter superfamily.

The protein localises to the cell membrane. In terms of biological role, involved in a binding protein-dependent transport system responsible for the uptake of melibiose, raffinose and isomaltotriose. Probably responsible for energy coupling to the transport system. The protein is Multiple sugar-binding transport ATP-binding protein MsmK (msmK) of Streptococcus mutans serotype c (strain ATCC 700610 / UA159).